Consider the following 720-residue polypeptide: Putative glutamine--fructose-6-phosphate aminotransferase [isomerizing] (720 aa).

The active-site Nucleophile; for GATase activity is the cysteine 2. The 320-residue stretch at 2–321 folds into the Glutamine amidotransferase type-2 domain; it reads CGIFGYCNFL…DNDTAHIYDG (320 aa). The segment covering 266-280 has biased composition (polar residues); it reads STTSTFNHGSSTETP. The tract at residues 266 to 285 is disordered; sequence STTSTFNHGSSTETPAENGL. SIS domains follow at residues 393–532 and 565–710; these read WLTE…DLVS and CDKK…VDLP.

It catalyses the reaction D-fructose 6-phosphate + L-glutamine = D-glucosamine 6-phosphate + L-glutamate. Its pathway is nucleotide-sugar biosynthesis; UDP-N-acetyl-alpha-D-glucosamine biosynthesis; alpha-D-glucosamine 6-phosphate from D-fructose 6-phosphate: step 1/1. In terms of biological role, involved in amino sugar synthesis (formation of chitin, supplies the amino sugars of asparagine-linked oligosaccharides of glycoproteins). In Saccharomyces cerevisiae (strain JAY291) (Baker's yeast), this protein is Putative glutamine--fructose-6-phosphate aminotransferase [isomerizing].